A 196-amino-acid chain; its full sequence is Histone H1.0 (196 aa).

Disordered regions lie at residues Met-1–Ser-29 and Ser-78–Lys-196. Residues Asp-24–Lys-97 form the H15 domain. The segment covering Pro-104–Lys-196 has biased composition (basic residues).

The protein belongs to the histone H1/H5 family.

The protein localises to the nucleus. It is found in the chromosome. In terms of biological role, histones H1 are necessary for the condensation of nucleosome chains into higher-order structures. The histones H1.0 are found in cells that are in terminal stages of differentiation or that have low rates of cell division. The protein is Histone H1.0 (h1-0) of Xenopus tropicalis (Western clawed frog).